Here is a 352-residue protein sequence, read N- to C-terminus: Nodal homolog 4-B (352 aa).

Residues 1–18 (MHLYFSCFILLFVPGGKS) form the signal peptide. Residues 19-278 (LGINSHLKHM…TIANSRRHRR (260 aa)) constitute a propeptide that is removed on maturation. 4 N-linked (GlcNAc...) asparagine glycosylation sites follow: N30, N37, N199, and N238. Residues 197 to 223 (GKNHSEGHMKQPKKLHRAKSAERRYQQ) are disordered.

Belongs to the TGF-beta family. In terms of assembly, homodimer; disulfide-linked.

The protein resides in the secreted. Cooperation and regulatory loops of multiple nodals are essential for mesendoderm patterning in early embryos. Plays a role in mesoderm formation and may be required for neural development. The sequence is that of Nodal homolog 4-B (nodal4-b) from Xenopus laevis (African clawed frog).